The sequence spans 167 residues: MNNIAYIALGSNIGDRETYLRQAVALLHQHAAVTVTKVSSIYETDPVGYEDQAQFLNMAVEIKTSLNPFELLELTQQIENELGRTREVRWGPRTADLDILLFNRENIETEQLIVPHPRMYERLFVLAPLAEICQQVEKEATSAETDQEGVRVWKQKSGVDEFVHSES.

Belongs to the HPPK family.

It carries out the reaction 6-hydroxymethyl-7,8-dihydropterin + ATP = (7,8-dihydropterin-6-yl)methyl diphosphate + AMP + H(+). It participates in cofactor biosynthesis; tetrahydrofolate biosynthesis; 2-amino-4-hydroxy-6-hydroxymethyl-7,8-dihydropteridine diphosphate from 7,8-dihydroneopterin triphosphate: step 4/4. Its function is as follows. Catalyzes the transfer of pyrophosphate from adenosine triphosphate (ATP) to 6-hydroxymethyl-7,8-dihydropterin, an enzymatic step in folate biosynthesis pathway. The polypeptide is 2-amino-4-hydroxy-6-hydroxymethyldihydropteridine pyrophosphokinase (folK) (Bacillus subtilis (strain 168)).